Reading from the N-terminus, the 63-residue chain is uncharacterized protein (63 aa).

This is an uncharacterized protein from Dictyostelium discoideum (Social amoeba).